Consider the following 104-residue polypeptide: DNA-directed RNA polymerase subunit omega (104 aa).

A disordered region spans residues 60–104 (VIHPDPEGKREAVRRRAEEERLRKEEEERKIKEQIAKEKEEGEKI). Basic and acidic residues predominate over residues 63 to 104 (PDPEGKREAVRRRAEEERLRKEEEERKIKEQIAKEKEEGEKI).

Belongs to the RNA polymerase subunit omega family. In terms of assembly, the RNAP catalytic core consists of 2 alpha, 1 beta, 1 beta' and 1 omega subunit. When a sigma factor is associated with the core the holoenzyme is formed, which can initiate transcription.

It carries out the reaction RNA(n) + a ribonucleoside 5'-triphosphate = RNA(n+1) + diphosphate. Functionally, promotes RNA polymerase assembly. Latches the N- and C-terminal regions of the beta' subunit thereby facilitating its interaction with the beta and alpha subunits. This is DNA-directed RNA polymerase subunit omega from Streptococcus sanguinis (strain SK36).